Consider the following 183-residue polypeptide: UPF0398 protein PEPE_0933 (183 aa).

Belongs to the UPF0398 family.

This Pediococcus pentosaceus (strain ATCC 25745 / CCUG 21536 / LMG 10740 / 183-1w) protein is UPF0398 protein PEPE_0933.